Here is a 428-residue protein sequence, read N- to C-terminus: Pregnancy-specific beta-1-glycoprotein 3 (428 aa).

An N-terminal signal peptide occupies residues 1-34; the sequence is MGPLSAPPCTQRITWKGLLLTALLLNFWNLPTTA. An Ig-like V-type domain is found at 35–144; it reads QVTIEAEPTK…TGHFTFTLYL (110 aa). Residues Asn104 and Asn111 are each glycosylated (N-linked (GlcNAc...) asparagine). Residues 127-129 carry the Cell attachment site motif; the sequence is RGD. Ig-like C2-type domains follow at residues 147 to 234, 240 to 327, and 335 to 410; these read PKPS…VTLN, PKPY…VTLN, and PRIY…KSMT. Intrachain disulfides connect Cys169/Cys217, Cys262/Cys310, and Cys354/Cys394. Residues Asn268 and Asn303 are each glycosylated (N-linked (GlcNAc...) asparagine).

It belongs to the immunoglobulin superfamily. CEA family.

The protein localises to the secreted. This is Pregnancy-specific beta-1-glycoprotein 3 (PSG3) from Homo sapiens (Human).